The sequence spans 1050 residues: uncharacterized protein (1050 aa).

Coiled-coil stretches lie at residues 1–420 (MEKV…TAKM), 463–627 (YSLL…IREL), and 692–981 (NDSK…NLLS).

This is an uncharacterized protein from Arabidopsis thaliana (Mouse-ear cress).